The chain runs to 290 residues: 33 kDa chaperonin (290 aa).

Intrachain disulfides connect cysteine 235/cysteine 237 and cysteine 268/cysteine 271.

The protein belongs to the HSP33 family. In terms of processing, under oxidizing conditions two disulfide bonds are formed involving the reactive cysteines. Under reducing conditions zinc is bound to the reactive cysteines and the protein is inactive.

Its subcellular location is the cytoplasm. In terms of biological role, redox regulated molecular chaperone. Protects both thermally unfolding and oxidatively damaged proteins from irreversible aggregation. Plays an important role in the bacterial defense system toward oxidative stress. This is 33 kDa chaperonin from Streptococcus mutans serotype c (strain ATCC 700610 / UA159).